A 37-amino-acid chain; its full sequence is MSDINATRLPLFFPPDFRPPCVGDADNFTLTRGENLC.

The propeptide occupies methionine 1 to proline 10. Residues leucine 11–proline 20 constitute a cross-link (cyclopeptide (Leu-Pro)). Residues cysteine 21–cysteine 37 constitute a propeptide that is removed on maturation.

The protein belongs to the MSDIN fungal toxin family. Post-translationally, processed by the macrocyclase-peptidase enzyme POPB to yield a toxic cyclic decapeptide. POPB first removes 10 residues from the N-terminus. Conformational trapping of the remaining peptide forces the enzyme to release this intermediate rather than proceed to macrocyclization. The enzyme rebinds the remaining peptide in a different conformation and catalyzes macrocyclization of the N-terminal 10 residues. In terms of tissue distribution, expressed in basidiocarps.

Its function is as follows. Probable toxin that belongs to the MSDIN-like toxin family responsible for a large number of food poisoning cases and deaths. This Amanita exitialis (Guangzhou destroying angel) protein is MSDIN-like toxin proprotein 5.